The chain runs to 277 residues: Probable CCR4-associated factor 1 homolog 10 (277 aa).

A divalent metal cation contacts are provided by Asp40, Glu42, Asp166, and Asp235.

This sequence belongs to the CAF1 family. As to quaternary structure, component of the CCR4-NOT complex, at least composed of CRR4 and CAF1 proteins. A divalent metal cation is required as a cofactor.

It is found in the nucleus. The protein resides in the cytoplasm. It catalyses the reaction Exonucleolytic cleavage of poly(A) to 5'-AMP.. In terms of biological role, ubiquitous transcription factor required for a diverse set of processes. It is a component of the CCR4 complex involved in the control of gene expression. The sequence is that of Probable CCR4-associated factor 1 homolog 10 (CAF1-10) from Arabidopsis thaliana (Mouse-ear cress).